Consider the following 253-residue polypeptide: Kallikrein-7 (253 aa).

The signal sequence occupies residues 1–22; that stretch reads MARSLLLPLQILLLSLALETAG. The propeptide at 23–29 is activation peptide; it reads EEAQGDK. The Peptidase S1 domain occupies 30 to 250; it reads IIDGAPCARG…FTKWINDTMK (221 aa). 6 disulfide bridges follow: cysteine 36–cysteine 165, cysteine 55–cysteine 71, cysteine 137–cysteine 239, cysteine 144–cysteine 211, cysteine 176–cysteine 190, and cysteine 201–cysteine 226. Catalysis depends on charge relay system residues histidine 70 and aspartate 112. Serine 205 (charge relay system) is an active-site residue. An N-linked (GlcNAc...) asparagine glycan is attached at asparagine 246.

The protein belongs to the peptidase S1 family. Kallikrein subfamily. In terms of tissue distribution, abundantly expressed in the skin and is expressed by keratinocytes in the epidermis. Also expressed in the brain, mammary gland, cerebellum, spinal cord and kidney. Lower levels in salivary glands, uterus, thymus, thyroid, placenta, trachea and testis. Up-regulated in ovarian carcinoma, especially late-stage serous carcinoma, compared with normal ovaries and benign adenomas (at protein level).

Its subcellular location is the secreted. The enzyme catalyses Cleavage of proteins with aromatic side chains in the P1 position.. With respect to regulation, inhibited by Zn2+ and Cu2+ at low micromolar concentrations. Inhibited by SERPINA12. Functionally, may catalyze the degradation of intercellular cohesive structures in the cornified layer of the skin in the continuous shedding of cells from the skin surface. Specific for amino acid residues with aromatic side chains in the P1 position. Cleaves insulin A chain at '14-Tyr-|-Gln-15' and insulin B chain at '6-Leu-|-Cys-7', '16-Tyr-|-Leu-17', '25-Phe-|-Tyr-26' and '26-Tyr-|-Thr-27'. Could play a role in the activation of precursors to inflammatory cytokines. In Homo sapiens (Human), this protein is Kallikrein-7 (KLK7).